Here is a 75-residue protein sequence, read N- to C-terminus: Exodeoxyribonuclease 7 small subunit (75 aa).

Belongs to the XseB family. As to quaternary structure, heterooligomer composed of large and small subunits.

The protein resides in the cytoplasm. The catalysed reaction is Exonucleolytic cleavage in either 5'- to 3'- or 3'- to 5'-direction to yield nucleoside 5'-phosphates.. Functionally, bidirectionally degrades single-stranded DNA into large acid-insoluble oligonucleotides, which are then degraded further into small acid-soluble oligonucleotides. The polypeptide is Exodeoxyribonuclease 7 small subunit (Thermotoga maritima (strain ATCC 43589 / DSM 3109 / JCM 10099 / NBRC 100826 / MSB8)).